The following is a 294-amino-acid chain: Nucleotide-binding protein Tfu_2020 (294 aa).

18-25 (GMSGAGRS) is a binding site for ATP. Residue 69–72 (DVRS) participates in GTP binding.

The protein belongs to the RapZ-like family.

Its function is as follows. Displays ATPase and GTPase activities. The protein is Nucleotide-binding protein Tfu_2020 of Thermobifida fusca (strain YX).